The following is a 195-amino-acid chain: Probable molybdenum cofactor guanylyltransferase (195 aa).

GTP contacts are provided by residues 6-8 (LAG), lysine 18, aspartate 67, and aspartate 93. Aspartate 93 is a binding site for Mg(2+).

Belongs to the MobA family. The cofactor is Mg(2+).

It localises to the cytoplasm. The enzyme catalyses Mo-molybdopterin + GTP + H(+) = Mo-molybdopterin guanine dinucleotide + diphosphate. Functionally, transfers a GMP moiety from GTP to Mo-molybdopterin (Mo-MPT) cofactor (Moco or molybdenum cofactor) to form Mo-molybdopterin guanine dinucleotide (Mo-MGD) cofactor. The protein is Probable molybdenum cofactor guanylyltransferase of Thermococcus sibiricus (strain DSM 12597 / MM 739).